The primary structure comprises 217 residues: DNA-binding transcriptional activator DevR/DosR (217 aa).

A Response regulatory domain is found at 3–119; it reads KVFLVDDHEV…ELARAVKDVG (117 aa). Asp-54 is subject to 4-aspartylphosphate. One can recognise an HTH luxR-type domain in the interval 143 to 208; sequence KQDPLSGLTD…QAAVFATELK (66 aa). The segment at residues 167–186 is a DNA-binding region (H-T-H motif); the sequence is NKQIADRMFLAEKTVKNYVS. Phosphothreonine; by PknH occurs at positions 198 and 205.

As to quaternary structure, homodimer. Interacts with NarL. Phosphorylated on Asp-54 by both DevS (DosS) and DosT. Phosphorylated on Thr-198 and Thr-205 by PknH, which enhances DevR dimerization. Aspartate phosphorylation and threonine phosphorylation cooperatively enhance DevR binding to DNA.

The protein resides in the cytoplasm. It is found in the host cytoplasmic vesicle. The protein localises to the host phagosome. Functionally, member of the two-component regulatory system DevR/DevS (also called DosR/DosS) involved in onset of the dormancy response. Regulates an approximately 48-member regulon. When phosphorylated binds and activates the promoter of DevR regulon genes in response to hypoxia. The presence of target DNA increases stability of phospho-DevR in vitro. Activates its own transcription under hypoxic but not aerobic conditions, probably binds as a dimer to tandem binding sites within the devR and hspX promoters. Accepts a phosphate group from DevS (DosS) and from DosT. Does not regulate transcription of dosT. The sequence is that of DNA-binding transcriptional activator DevR/DosR from Mycobacterium tuberculosis (strain ATCC 25618 / H37Rv).